The primary structure comprises 691 residues: MNRFWNTKKFSLTNADGLCATLNEISQNDEVLVVQPSVLPVLNSLLTFQDLTQSTPVRKITLLDDQLSDDLPSALGSVPQMDLIFLIDVRTSLRLPPQLLDAAQKHNLSSLHIIYCRWKPSFQNTLEDTEQWQKDGFDLNSKKTHFPNVIESQLKELSNEYTLYPWDLLPFPQIDENVLLTHSLYNMENVNMYYPNLRSLQSATESILVDDMVNSLQSLIFETNSIITNVVSIGNLSKRCSHLLKKRIDEHQTENDLFIKGTLYGERTNCGLEMDLIILERNTDPITPLLTQLTYAGILDDLYEFNSGIKIKEKDMNFNYKEDKIWNDLKFLNFGSIGPQLNKLAKELQTQYDTRHKAESVHEIKEFVDSLGSLQQRQAFLKNHTTLSSDVLKVVETEEYGSFNKILELELEILMGNTLNNDIEDIILELQYQYEVDQKKILRLICLLSLCKNSLREKDYEYLRTFMIDSWGIEKCFQLESLAELGFFTSKTGKTDLHITTSKSTRLQKEYRYISQWFNTVPIEDEHAADKITNENDDFSEATFAYSGVVPLTMRLVQMLYDRSILFHNYSSQQPFILSREPRVSQTEDLIEQLYGDSHAIEESIWVPGTITKKINASIKSNNRRSIDGSNGTFHAAEDIALVVFLGGVTMGEIAIMKHLQKILGKKGINKRFIIIADGLINGTRIMNSIS.

Ser-626 is subject to Phosphoserine.

The protein belongs to the STXBP/unc-18/SEC1 family. As to quaternary structure, component of the HOPS complex which is composed of PEP5, VPS16, PEP3, VPS33, VPS39 and VPS41. HOPS associates with phosphoinositides and the PX domain of VAM7. Interacts with IVY1 and VAM7.

It localises to the vacuole. Functionally, essential for vacuolar biogenesis, maturation and function. Involved in the sorting of vacuolar proteins from the Golgi apparatus and their targeting to the vacuole. Acts as a component of the HOPS complex that acts during the docking stage of vacuole fusion. HOPS is an effector for the vacuolar Rab GTPase YPT7 and is required for vacuolar SNARE complex assembly. It remains bound to SNARE complexes after vacuole fusion. This Saccharomyces cerevisiae (strain ATCC 204508 / S288c) (Baker's yeast) protein is Vacuolar protein sorting-associated protein 33 (VPS33).